The primary structure comprises 269 residues: MPDFSMSNLAVAFSITLAAGLFTVLGSGLVMFSKTPNPRVLSFGLAFAGGAMVYVSLTEIFSKSSEAFAEIYDKDHAFAAATMAFLAGMGGIALIDRLVPNPHETLDAQDPSFQESKRRHIARVGMMAAFAITAHNFPEGLATFFATLENPAVGMPLALAIAIHNIPEGISIAAPVYFATRSRKKTVWACLLSGLAEPLGAALGYLVLQPFLSPAVFGSVFGVIAGVMVFLALDELLPAAKRYSDGHETVYGLTTGMAVIAVSLVLFHF.

Transmembrane regions (helical) follow at residues 12-32 (AFSITLAAGLFTVLGSGLVMF), 41-61 (LSFGLAFAGGAMVYVSLTEIF), 75-95 (DHAFAAATMAFLAGMGGIALI), 126-146 (MMAAFAITAHNFPEGLATFFA), 152-172 (AVGMPLALAIAIHNIPEGISI), 187-207 (VWACLLSGLAEPLGAALGYLV), 211-231 (FLSPAVFGSVFGVIAGVMVFL), and 249-269 (TVYGLTTGMAVIAVSLVLFHF). Asn136 and Glu139 together coordinate Fe(2+). Positions 139 and 164 each coordinate Zn(2+). Residues Asn165, Glu168, and Glu197 each contribute to the Fe(2+) site. Glu168 is a binding site for Zn(2+).

It belongs to the ZIP transporter (TC 2.A.5) family. ZupT subfamily.

It is found in the cell inner membrane. The enzyme catalyses Zn(2+)(in) = Zn(2+)(out). In terms of biological role, mediates zinc uptake. May also transport other divalent cations. This is Zinc transporter ZupT from Neisseria meningitidis serogroup B (strain ATCC BAA-335 / MC58).